The following is a 90-amino-acid chain: DNA-binding protein HTa (90 aa).

This sequence belongs to the bacterial histone-like protein family. As to quaternary structure, homotetramer.

Its function is as follows. Histone-like DNA-binding protein which is capable of wrapping DNA to stabilize it, and thus to prevent its denaturation under extreme environmental conditions. The protein is DNA-binding protein HTa of Thermoplasma acidophilum (strain ATCC 25905 / DSM 1728 / JCM 9062 / NBRC 15155 / AMRC-C165).